Here is a 651-residue protein sequence, read N- to C-terminus: Macrolide export ATP-binding/permease protein MacB (651 aa).

Positions 2 to 239 (IEIVNVTKTY…PQMPQGGMEA (238 aa)) constitute an ABC transporter domain. 38–45 (GASGSGKS) provides a ligand contact to ATP. Helical transmembrane passes span 269 to 289 (FLSVLGILVGVASVIAMMALG), 532 to 552 (IAAISLVVGGIGIMNIMLVSV), 589 to 609 (IIGIVVGVGVSVMLSAFAGWA), and 614 to 634 (MFSVVLATGFSVLIGLFFGLW).

It belongs to the ABC transporter superfamily. Macrolide exporter (TC 3.A.1.122) family. In terms of assembly, homodimer.

It is found in the cell inner membrane. Functionally, non-canonical ABC transporter that contains transmembrane domains (TMD), which form a pore in the inner membrane, and an ATP-binding domain (NBD), which is responsible for energy generation. Confers resistance against macrolides. The polypeptide is Macrolide export ATP-binding/permease protein MacB (Chlorobaculum tepidum (strain ATCC 49652 / DSM 12025 / NBRC 103806 / TLS) (Chlorobium tepidum)).